The primary structure comprises 334 residues: MTLRIGIIGTGAIGTDHARRINRVLSGAEVTAVTDVNRDNAEACVAGVAPGAQILGSAEEVIAASDAVLVCSWGAAHEAQVLAAIAAGKPCFCEKPLATEAYGARRIVEAEGAMGRRLVQVGFMRRYDRGYIALKETVRTRLGPPLMIHAAHRNPTVPGRYRTPMAIHDTLIHEIDVLRWLLDDEYVSAQVIFPRATRHTHAGLRDPQIVLLETAKGVRIDVEIFVNCRYGYDIQCEVVGEEGTARLPEPMAIPTRLGAMFGQPILMDWKDRFIDSYDVELQDFLKAAAQGTAAGPSAWDGYAAAITADVCVQAQERPGAILPVTLPARPALYA.

This sequence belongs to the Gfo/Idh/MocA family. In terms of assembly, homotetramer.

The catalysed reaction is myo-inositol + NAD(+) = scyllo-inosose + NADH + H(+). Functionally, involved in the oxidation of myo-inositol (MI) to 2-keto-myo-inositol (2KMI or 2-inosose). This chain is Inositol 2-dehydrogenase, found in Cereibacter sphaeroides (strain ATCC 17029 / ATH 2.4.9) (Rhodobacter sphaeroides).